The sequence spans 476 residues: Glutamate--tRNA ligase (476 aa).

The 'HIGH' region motif lies at Pro9–Thr19. Positions Lys248–Arg252 match the 'KMSKS' region motif. Lys251 contacts ATP.

This sequence belongs to the class-I aminoacyl-tRNA synthetase family. Glutamate--tRNA ligase type 1 subfamily. As to quaternary structure, monomer.

It localises to the cytoplasm. It carries out the reaction tRNA(Glu) + L-glutamate + ATP = L-glutamyl-tRNA(Glu) + AMP + diphosphate. Functionally, catalyzes the attachment of glutamate to tRNA(Glu) in a two-step reaction: glutamate is first activated by ATP to form Glu-AMP and then transferred to the acceptor end of tRNA(Glu). In Prochlorococcus marinus (strain NATL1A), this protein is Glutamate--tRNA ligase.